The chain runs to 432 residues: Glutamate-1-semialdehyde 2,1-aminomutase (432 aa).

N6-(pyridoxal phosphate)lysine is present on Lys-271.

The protein belongs to the class-III pyridoxal-phosphate-dependent aminotransferase family. HemL subfamily. In terms of assembly, homodimer. It depends on pyridoxal 5'-phosphate as a cofactor.

The protein resides in the cytoplasm. The enzyme catalyses (S)-4-amino-5-oxopentanoate = 5-aminolevulinate. It participates in porphyrin-containing compound metabolism; protoporphyrin-IX biosynthesis; 5-aminolevulinate from L-glutamyl-tRNA(Glu): step 2/2. The protein is Glutamate-1-semialdehyde 2,1-aminomutase of Protochlamydia amoebophila (strain UWE25).